A 298-amino-acid polypeptide reads, in one-letter code: GTPase Era (298 aa).

Residues 3–170 enclose the Era-type G domain; it reads KSGFVAILGR…IKLLTDNLEE (168 aa). The G1 stretch occupies residues 11–18; the sequence is GRPNVGKS. 11–18 provides a ligand contact to GTP; the sequence is GRPNVGKS. The interval 37–41 is G2; it reads QTTRN. The segment at 58 to 61 is G3; sequence DTPG. GTP is bound by residues 58-62 and 120-123; these read DTPGI and NKID. Residues 120 to 123 form a G4 region; that stretch reads NKID. The tract at residues 149-151 is G5; it reads ISA. Residues 201–279 form the KH type-2 domain; it reads TQQEVPHSVA…YLETWVKVKK (79 aa).

The protein belongs to the TRAFAC class TrmE-Era-EngA-EngB-Septin-like GTPase superfamily. Era GTPase family. Monomer.

It localises to the cytoplasm. The protein localises to the cell membrane. Its function is as follows. An essential GTPase that binds both GDP and GTP, with rapid nucleotide exchange. Plays a role in 16S rRNA processing and 30S ribosomal subunit biogenesis and possibly also in cell cycle regulation and energy metabolism. The protein is GTPase Era of Streptococcus pyogenes serotype M3 (strain ATCC BAA-595 / MGAS315).